Here is a 237-residue protein sequence, read N- to C-terminus: Dynein axonemal assembly factor 19 (237 aa).

A coiled-coil region spans residues 8-33 (NFKALEKELQAALAADEKYKRENAAK).

It belongs to the DNAAF19/PR46b family. As to quaternary structure, homodimer.

It localises to the cytoplasm. The protein localises to the cell projection. The protein resides in the cilium. It is found in the flagellum. Functionally, dynein-attachment factor required for cilia motility. The sequence is that of Dynein axonemal assembly factor 19 (Dnaaf19) from Mus musculus (Mouse).